Here is a 272-residue protein sequence, read N- to C-terminus: NAD kinase (272 aa).

Aspartate 62 functions as the Proton acceptor in the catalytic mechanism. NAD(+)-binding positions include aspartate 62–glycine 63, arginine 67, asparagine 129–glutamate 130, arginine 140, lysine 157, aspartate 159, isoleucine 167, serine 170–serine 175, alanine 194, and glutamine 229.

The protein belongs to the NAD kinase family. The cofactor is a divalent metal cation.

It localises to the cytoplasm. The catalysed reaction is NAD(+) + ATP = ADP + NADP(+) + H(+). Functionally, involved in the regulation of the intracellular balance of NAD and NADP, and is a key enzyme in the biosynthesis of NADP. Catalyzes specifically the phosphorylation on 2'-hydroxyl of the adenosine moiety of NAD to yield NADP. This chain is NAD kinase, found in Thermoplasma acidophilum (strain ATCC 25905 / DSM 1728 / JCM 9062 / NBRC 15155 / AMRC-C165).